Here is a 305-residue protein sequence, read N- to C-terminus: Coiled-coil domain-containing protein 50 (305 aa).

Position 2 is an N-acetylalanine (Ala2). Ser5 carries the phosphoserine modification. The stretch at 86 to 130 forms a coiled coil; sequence EIAQEIQEKLTIEAERRRIQEKKDEDIARLLQEKELQEEKRRKKH. Disordered regions lie at residues 122 to 142 and 218 to 305; these read QEEK…VFGD and KKAK…HNKQ. Basic and acidic residues-rich tracts occupy residues 218-239 and 247-263; these read KKAK…ECKL and KSKE…DRPS. Positions 279–305 are enriched in polar residues; sequence THFTNQHSTTWHLPKSESSQKGFHNKQ.

Interacts with RNF126. Post-translationally, phosphorylated on tyrosine residues. In terms of tissue distribution, widely expressed.

The protein resides in the cytoplasm. Involved in EGFR signaling. The polypeptide is Coiled-coil domain-containing protein 50 (Ccdc50) (Mus musculus (Mouse)).